We begin with the raw amino-acid sequence, 268 residues long: Zinc finger protein SNAI2 (268 aa).

The interval 1–20 is SNAG domain; it reads MPRSFLVKKHFNASKKPNYS. Residues 80–117 form a disordered region; the sequence is PASLGRVSPPPPSDTSSKDHSGSESPISDEEERLQSKL. 4 C2H2-type zinc fingers span residues 128–150, 159–181, 185–207, and 213–235; these read FQCNLCNKTYSTFSGLGKHKQLH, FSCKYCDKEYVSLGALKMHIRTH, CVCKICGKAFSRPWLLQGHIRTH, and FSCSHCSRAFADRSNLRAHLQTH. The C2H2-type 5; atypical zinc finger occupies 241-264; sequence YQCKSCSKTFSRMSLLHKHEESGC.

This sequence belongs to the snail C2H2-type zinc-finger protein family. As to quaternary structure, interacts (via SNAG domain) with LIMD1 (via LIM domains), WTIP (via LIM domains) and AJUBA (via LIM domains). Interacts (via zinc fingers) with KPNA2, KPNB1, and TNPO1. May interact (via zinc fingers) with IPO7. Phosphorylated by GSK3B. Once phosphorylated, it becomes a target for ubiquitination. Post-translationally, ubiquitinated by the SCF(FBXO11) complex; ubiquitination requires previous GSK3B-mediated SNAI2 phosphorylation.

The protein resides in the nucleus. The protein localises to the cytoplasm. Its function is as follows. Transcriptional repressor that modulates both activator-dependent and basal transcription. Involved in the generation and migration of neural crest cells. Plays a role in mediating RAF1-induced transcriptional repression of the TJ protein, occludin (OCLN) and subsequent oncogenic transformation of epithelial cells. Represses BRCA2 expression by binding to its E2-box-containing silencer and recruiting CTBP1 and HDAC1 in breast cells. In epidermal keratinocytes, binds to the E-box in ITGA3 promoter and represses its transcription. Involved in the regulation of ITGB1 and ITGB4 expression and cell adhesion and proliferation in epidermal keratinocytes. Binds to E-box2 domain of BSG and activates its expression during TGFB1-induced epithelial-mesenchymal transition (EMT) in hepatocytes. Represses E-Cadherin/CDH1 transcription via E-box elements. Involved in osteoblast maturation. Binds to RUNX2 and SOC9 promoters and may act as a positive and negative transcription regulator, respectively, in osteoblasts. Binds to CXCL12 promoter via E-box regions in mesenchymal stem cells and osteoblasts. Plays an essential role in TWIST1-induced EMT and its ability to promote invasion and metastasis. The polypeptide is Zinc finger protein SNAI2 (SNAI2) (Bos taurus (Bovine)).